The sequence spans 98 residues: NADH-ubiquinone oxidoreductase chain 4L (98 aa).

Transmembrane regions (helical) follow at residues 1 to 21, 29 to 49, and 61 to 81; these read MTLIHMNIIMAFSMSLVGLLM, ALLCLEGMMLSLFVLAALTIL, and IILLVFAACEAAIGLALLVTI.

Belongs to the complex I subunit 4L family. As to quaternary structure, core subunit of respiratory chain NADH dehydrogenase (Complex I) which is composed of 45 different subunits.

The protein localises to the mitochondrion inner membrane. It catalyses the reaction a ubiquinone + NADH + 5 H(+)(in) = a ubiquinol + NAD(+) + 4 H(+)(out). Core subunit of the mitochondrial membrane respiratory chain NADH dehydrogenase (Complex I) which catalyzes electron transfer from NADH through the respiratory chain, using ubiquinone as an electron acceptor. Part of the enzyme membrane arm which is embedded in the lipid bilayer and involved in proton translocation. The polypeptide is NADH-ubiquinone oxidoreductase chain 4L (MT-ND4L) (Eubalaena australis (Southern right whale)).